We begin with the raw amino-acid sequence, 590 residues long: V-type ATP synthase alpha chain (590 aa).

234-241 lines the ATP pocket; sequence GGFGAGKT.

The protein belongs to the ATPase alpha/beta chains family.

It carries out the reaction ATP + H2O + 4 H(+)(in) = ADP + phosphate + 5 H(+)(out). In terms of biological role, produces ATP from ADP in the presence of a proton gradient across the membrane. The V-type alpha chain is a catalytic subunit. The protein is V-type ATP synthase alpha chain of Halothermothrix orenii (strain H 168 / OCM 544 / DSM 9562).